A 298-amino-acid chain; its full sequence is Protein DR_1172 (298 aa).

LEA-like repeat units follow at residues 48-117, 128-197, and 201-270; these read DAAQ…NVGQ, DQAK…DVAQ, and QGAQ…AGKQ. Residues 174–193 are compositionally biased toward basic and acidic residues; that stretch reads VQDVKADASKAADQAKDKAQ. The interval 174–298 is disordered; that stretch reads VQDVKADASK…MTGNTNTRKN (125 aa). Positions 194-208 are enriched in low complexity; it reads DVAQNVKQGAQQAAS. A compositionally biased stretch (basic and acidic residues) spans 209–233; that stretch reads DAKDKVQDVKADASRAADQAKDKAQ. A compositionally biased stretch (low complexity) spans 275-298; that stretch reads GSTTNNAGTAGNTGMTGNTNTRKN.

It belongs to the LEA type 1 family.

The chain is Protein DR_1172 from Deinococcus radiodurans (strain ATCC 13939 / DSM 20539 / JCM 16871 / CCUG 27074 / LMG 4051 / NBRC 15346 / NCIMB 9279 / VKM B-1422 / R1).